The sequence spans 329 residues: Isoaspartyl peptidase/L-asparaginase (329 aa).

Thr173 (nucleophile) is an active-site residue. Substrate is bound by residues 201-204 (RVSD) and 222-225 (TGVG).

This sequence belongs to the Ntn-hydrolase family. Heterotetramer of two alpha and two beta chains arranged as a dimer of alpha/beta heterodimers. Cleaved into an alpha and beta chain by autocatalysis; this activates the enzyme. The N-terminal residue of the beta subunit is responsible for the nucleophile hydrolase activity.

The enzyme catalyses Cleavage of a beta-linked Asp residue from the N-terminus of a polypeptide.. Its function is as follows. Degrades proteins damaged by L-isoaspartyl residue formation (also known as beta-Asp residues). Probably performs the final step in the degradation of the reserve polymer cyanophycin (depolymerizes the building block L-beta-Asp-Arg). Also has L-asparaginase activity. In Synechocystis sp. (strain ATCC 27184 / PCC 6803 / Kazusa), this protein is Isoaspartyl peptidase/L-asparaginase.